The primary structure comprises 328 residues: Malate dehydrogenase (328 aa).

12 to 18 provides a ligand contact to NAD(+); it reads GAAGQIG. Residues R93 and R99 each coordinate substrate. NAD(+) contacts are provided by residues N106, Q113, and 130–132; that span reads VGN. N132 and R163 together coordinate substrate. The active-site Proton acceptor is the H188.

This sequence belongs to the LDH/MDH superfamily. MDH type 2 family.

The enzyme catalyses (S)-malate + NAD(+) = oxaloacetate + NADH + H(+). Its function is as follows. Catalyzes the reversible oxidation of malate to oxaloacetate. In Saccharopolyspora erythraea (strain ATCC 11635 / DSM 40517 / JCM 4748 / NBRC 13426 / NCIMB 8594 / NRRL 2338), this protein is Malate dehydrogenase.